Consider the following 595-residue polypeptide: Estrogen receptor (595 aa).

Residues 1 to 184 form a modulating (transactivation AF-1); mediates interaction with MACROD1 region; it reads MTMTLHTKAS…AMESAKETRY (184 aa). An O-linked (GlcNAc) serine glycan is attached at Ser-10. The required for interaction with NCOA1 stretch occupies residues 35 to 47; it reads LERPLGEVYVDGS. The tract at residues 35 to 174 is interaction with DDX5; self-association; it reads LERPLGEVYV…LASTGDKGSM (140 aa). Phosphoserine; by CDK2 is present on residues Ser-104 and Ser-106. Ser-118 is subject to Phosphoserine. A disordered region spans residues 149–173; the sequence is FYRPTSDNRRQSGRERLASTGDKGS. Residues 154-165 are compositionally biased toward basic and acidic residues; it reads SDNRRQSGRERL. Ser-167 carries the post-translational modification Phosphoserine; by CK2. 2 NR C4-type zinc fingers span residues 185–205 and 221–245; these read CAVCNDYASGYHYGVWSCEGC and CPATNQCTIDKNRRKSCQACRLRKC. The nuclear receptor DNA-binding region spans 185 to 250; it reads CAVCNDYASG…RLRKCYEVGM (66 aa). The interval 185–310 is mediates interaction with DNTTIP2; the sequence is CAVCNDYASG…TKKNSPALSL (126 aa). Positions 251-310 are hinge; sequence MKGGIRKDRRGGRMLKHKRQRDEGEGRNEVGSSGDVRASNLWPSPLLIKHTKKNSPALSL. A compositionally biased stretch (basic residues) spans 257 to 269; it reads KDRRGGRMLKHKR. Residues 257 to 287 are disordered; it reads KDRRGGRMLKHKRQRDEGEGRNEVGSSGDVR. Asymmetric dimethylarginine; by PRMT1 is present on Arg-260. Positions 262–595 are interaction with AKAP13; that stretch reads GRMLKHKRQR…EEAGAFPTTV (334 aa). A self-association region spans residues 264-595; the sequence is MLKHKRQRDE…EEAGAFPTTV (332 aa). The NR LBD domain occupies 311–547; sequence TADQMVSALL…DLLLEMLDAH (237 aa). The segment at 311–595 is transactivation AF-2; that stretch reads TADQMVSALL…EEAGAFPTTV (285 aa). Residues Glu-353 and Arg-394 each coordinate 17beta-estradiol. Cys-447 is lipidated: S-palmitoyl cysteine. His-524 serves as a coordination point for 17beta-estradiol. Tyr-537 bears the Phosphotyrosine; by Tyr-kinases mark. Residue Thr-571 is glycosylated (O-linked (GlcNAc) threonine).

It belongs to the nuclear hormone receptor family. NR3 subfamily. In terms of assembly, binds DNA as a homodimer. Can form a heterodimer with ESR2. Interacts with coactivator NCOA5. Interacts with PELP1, the interaction is enhanced by 17-beta-estradiol; the interaction increases ESR1 transcriptional activity. Interacts with NCOA7; the interaction is ligand-inducible. Interacts with AKAP13, CUEDC2, HEXIM1, KDM5A, MAP1S, SMARD1, and UBE1C. Interacts with MUC1; the interaction is stimulated by 7 beta-estradiol (E2) and enhances ESR1-mediated transcription. Interacts with DNTTIP2, and UIMC1. Interacts with KMT2D/MLL2. Interacts with ATAD2; the interaction is enhanced by estradiol. Interacts with KIF18A and LDB1. Interacts with RLIM (via its C-terminus). Interacts with MACROD1. Interacts with SH2D4A and PLCG. Interacts with SH2D4A; the interaction blocks binding to PLCG and inhibits estrogen-induced cell proliferation. Interacts with DYNLL1. Interacts with CCDC62; the interaction requires estradiol and appears to enhance the transcription of target genes. Interacts with NR2C1; the interaction prevents homodimerization of ESR1 and suppresses its transcriptional activity and cell growth. Interacts with DNAAF4. Interacts with PRMT2. Interacts with RBFOX2. Interacts with EP300; the interaction is estrogen-dependent and enhanced by CITED1. Interacts with CITED1; the interaction is estrogen-dependent. Interacts with FAM120B, FOXL2, PHB2 and SLC30A9. Interacts with coactivators NCOA3 and NCOA6. Interacts with STK3/MST2 only in the presence of SAV1 and vice-versa. Binds to CSNK1D. Interacts with NCOA2; NCOA2 can interact with ESR1 AF-1 and AF-2 domains simultaneously and mediate their transcriptional synergy. Interacts with DDX5. Interacts with NCOA1; the interaction seems to require a self-association of N-terminal and C-terminal regions. Interacts with ZNF366, DDX17, NFKB1, RELA, SP1 and SP3. Interacts with NRIP1. Interacts with GPER1; the interaction occurs in an estrogen-dependent manner. Interacts with CLOCK and the interaction is stimulated by estrogen. Interacts with TRIP4 (ufmylated); estrogen dependent. Interacts with LMTK3; the interaction phosphorylates ESR1 (in vitro) and protects it against proteasomal degradation. Interacts with CCAR2 (via N-terminus) in a ligand-independent manner. Interacts with ZFHX3. Interacts with SFR1 in a ligand-dependent and -independent manner. Interacts with DCAF13, LATS1 and DCAF1; regulates ESR1 ubiquitination and ubiquitin-mediated proteasomal degradation. Interacts (via DNA-binding domain) with POU4F2 (C-terminus); this interaction increases the estrogen receptor ESR1 transcriptional activity in a DNA- and ligand 17-beta-estradiol-independent manner. Interacts with ESRRB isoform 1. Interacts with UBE3A and WBP2. Interacts with GTF2B. Interacts with RBM39. In the absence of hormonal ligand, interacts with TACC1. Interacts with PI3KR1 or PI3KR2 and PTK2/FAK1. Interacts with SRC. Interacts with BAG1; the interaction is promoted in the absence of estradiol (17-beta-estradiol/E2). Interacts with and ubiquitinated by STUB1; the interaction is promoted in the absence of estradiol (17-beta-estradiol/E2). Interacts with NEDD8. Ubiquitinated; regulated by LATS1 via DCAF1 it leads to ESR1 proteasomal degradation. Deubiquitinated by OTUB1. Ubiquitinated by STUB1/CHIP; in the CA1 hippocampal region following loss of endogenous circulating estradiol (17-beta-estradiol/E2). Ubiquitinated by UBR5, leading to its degradation: UBR5 specifically recognizes and binds ligand-bound ESR1 when it is not associated with coactivators (NCOAs). In presence of NCOAs, the UBR5-degron is not accessible, preventing its ubiquitination and degradation. Post-translationally, phosphorylated by cyclin A/CDK2 and CK1. Phosphorylation probably enhances transcriptional activity. Dephosphorylation at Ser-118 by PPP5C inhibits its transactivation activity. Phosphorylated by LMTK3 (in vitro). In terms of processing, palmitoylated at Cys-447 by ZDHHC7 and ZDHHC21. Palmitoylation is required for plasma membrane targeting and for rapid intracellular signaling via ERK and AKT kinases and cAMP generation, but not for signaling mediated by the nuclear hormone receptor. Dimethylated by PRMT1 at Arg-260. The methylation may favor cytoplasmic localization. Demethylated by JMJD6 at Arg-260.

It localises to the nucleus. It is found in the cytoplasm. The protein resides in the golgi apparatus. The protein localises to the cell membrane. Functionally, nuclear hormone receptor. The steroid hormones and their receptors are involved in the regulation of eukaryotic gene expression and affect cellular proliferation and differentiation in target tissues. Ligand-dependent nuclear transactivation involves either direct homodimer binding to a palindromic estrogen response element (ERE) sequence or association with other DNA-binding transcription factors, such as AP-1/c-Jun, c-Fos, ATF-2, Sp1 and Sp3, to mediate ERE-independent signaling. Ligand binding induces a conformational change allowing subsequent or combinatorial association with multiprotein coactivator complexes through LXXLL motifs of their respective components. Mutual transrepression occurs between the estrogen receptor (ER) and NF-kappa-B in a cell-type specific manner. Decreases NF-kappa-B DNA-binding activity and inhibits NF-kappa-B-mediated transcription from the IL6 promoter and displace RELA/p65 and associated coregulators from the promoter. Recruited to the NF-kappa-B response element of the CCL2 and IL8 promoters and can displace CREBBP. Present with NF-kappa-B components RELA/p65 and NFKB1/p50 on ERE sequences. Can also act synergistically with NF-kappa-B to activate transcription involving respective recruitment adjacent response elements; the function involves CREBBP. Can activate the transcriptional activity of TFF1. Also mediates membrane-initiated estrogen signaling involving various kinase cascades. Essential for MTA1-mediated transcriptional regulation of BRCA1 and BCAS3. Maintains neuronal survival in response to ischemic reperfusion injury when in the presence of circulating estradiol (17-beta-estradiol/E2). In Felis catus (Cat), this protein is Estrogen receptor (ESR1).